The primary structure comprises 361 residues: Ankyrin repeat domain-containing protein 16 (361 aa).

ANK repeat units lie at residues 36–66, 70–99, 103–132, 136–165, 170–200, 204–234, 238–268, 273–302, and 306–335; these read AGDTLLHCAARHGHRDVLAYLAEAWGMDIEA, DYKRPLHEAASMGHRDCVRYLLGRGAAVDC, ADWTPLMMACTRKNLGVIQELVEHGANPLL, DGWNSFHIASREGDPLILQYLLTVCPGAWK, IRRTPLHTAAMHGHLEAVKVLLKRCQYEPDY, CGVTALMDAIQCGHIDVARLLLDEHGACLSA, LGAQALHRAAVTGQDEAIRFLVSELGVDVDV, THLTALHYAAKEGHTSTIQTLLSLGADINS, and KNRSALHLACAGQHLACAKFLLQSGLKDSE.

Interacts with AARS; the interaction is direct.

It is found in the cytoplasm. Its subcellular location is the nucleus. Functionally, required to prevent the misactivation of serine (Ser) with tRNA(Ala) by promoting the hydrolysis of Ser-mischarged tRNA(Ala), thereby playing a role in translational fidelity. Binds directly to the catalytic domain of AARS/AlaRS and captures Ser that is misactivated by AARS/AlaRS, preventing the charging of Ser adenylates to tRNA(Ala) and precluding Ser misincorporation in nascent peptides. In Homo sapiens (Human), this protein is Ankyrin repeat domain-containing protein 16.